The sequence spans 652 residues: Acetyl-coenzyme A synthetase (652 aa).

Residues 189–192 (RGGK), Thr311, and Asn335 contribute to the CoA site. Residues 387–389 (GEP), 411–416 (DTWWQT), Asp500, and Arg515 contribute to the ATP site. Ser523 contacts CoA. Arg526 provides a ligand contact to ATP. Mg(2+) contacts are provided by Val537, His539, and Val542. Position 584 (Arg584) interacts with CoA. Lys609 is modified (N6-acetyllysine).

It belongs to the ATP-dependent AMP-binding enzyme family. Mg(2+) is required as a cofactor. Acetylated. Deacetylation by the SIR2-homolog deacetylase activates the enzyme.

It carries out the reaction acetate + ATP + CoA = acetyl-CoA + AMP + diphosphate. Functionally, catalyzes the conversion of acetate into acetyl-CoA (AcCoA), an essential intermediate at the junction of anabolic and catabolic pathways. AcsA undergoes a two-step reaction. In the first half reaction, AcsA combines acetate with ATP to form acetyl-adenylate (AcAMP) intermediate. In the second half reaction, it can then transfer the acetyl group from AcAMP to the sulfhydryl group of CoA, forming the product AcCoA. The sequence is that of Acetyl-coenzyme A synthetase from Rhizobium rhizogenes (strain K84 / ATCC BAA-868) (Agrobacterium radiobacter).